Here is a 107-residue protein sequence, read N- to C-terminus: Iron-binding protein IscA (107 aa).

3 residues coordinate Fe cation: C35, C99, and C101.

The protein belongs to the HesB/IscA family. Homodimer; may form tetramers and higher multimers. It depends on Fe cation as a cofactor.

Its function is as follows. Is able to transfer iron-sulfur clusters to apo-ferredoxin. Multiple cycles of [2Fe2S] cluster formation and transfer are observed, suggesting that IscA acts catalytically. Recruits intracellular free iron so as to provide iron for the assembly of transient iron-sulfur cluster in IscU in the presence of IscS, L-cysteine and the thioredoxin reductase system TrxA/TrxB. The sequence is that of Iron-binding protein IscA from Pectobacterium atrosepticum (strain SCRI 1043 / ATCC BAA-672) (Erwinia carotovora subsp. atroseptica).